The chain runs to 434 residues: Perilipin-3 (434 aa).

The segment at 1 to 22 (MSADGAEADGSTQVTVEEPVQQ) is disordered. Serine 2 bears the N-acetylserine mark. The residue at position 31 (serine 31) is a Phosphoserine. Residue lysine 65 is modified to N6-acetyllysine. A Phosphoserine modification is found at serine 91. Lysine 122 participates in a covalent cross-link: Glycyl lysine isopeptide (Lys-Gly) (interchain with G-Cter in SUMO1). A phosphoserine mark is found at serine 130 and serine 148. A Phosphothreonine modification is found at threonine 170. Phosphoserine is present on residues serine 175 and serine 179. A Phosphothreonine modification is found at threonine 216. Phosphoserine is present on residues serine 217 and serine 241. The residue at position 251 (tyrosine 251) is a Phosphotyrosine. Coiled-coil stretches lie at residues 252 to 280 (EHSLGKLRATKQRAQEALLQLSQALSLME) and 353 to 377 (TNVKDQVQQARRQVEDLQATFSSIH).

The protein belongs to the perilipin family. As to quaternary structure, homooligomer. Interacts with M6PR (via the cytoplasmic domain). Interacts with IGF2R (via the cytoplasmic domain). In terms of processing, phosphorylation at Tyr-251 by isoform 1 of CHKA (CHKalpha2) promotes dissociation from lipid droplets: dissociation is followed by recruitment of autophagosome machinery to lipid droplets and subsequent lipid droplet lipolysis.

It is found in the lipid droplet. It localises to the endosome membrane. The protein localises to the cytoplasm. Its function is as follows. Structural component of lipid droplets, which is required for the formation and maintenance of lipid storage droplets. Required for the transport of mannose 6-phosphate receptors (MPR) from endosomes to the trans-Golgi network. This chain is Perilipin-3 (PLIN3), found in Pongo abelii (Sumatran orangutan).